Reading from the N-terminus, the 371-residue chain is Large ribosomal subunit protein bL27m (371 aa).

Residues 1–27 (MWNPILLDTSSFSFQKHVSGVFLQVRN) constitute a mitochondrion transit peptide.

It belongs to the bacterial ribosomal protein bL27 family. Component of the mitochondrial large ribosomal subunit (mt-LSU). Mature yeast 74S mitochondrial ribosomes consist of a small (37S) and a large (54S) subunit. The 37S small subunit contains a 15S ribosomal RNA (15S mt-rRNA) and 34 different proteins. The 54S large subunit contains a 21S rRNA (21S mt-rRNA) and 46 different proteins.

Its subcellular location is the mitochondrion. In terms of biological role, component of the mitochondrial ribosome (mitoribosome), a dedicated translation machinery responsible for the synthesis of mitochondrial genome-encoded proteins, including at least some of the essential transmembrane subunits of the mitochondrial respiratory chain. The mitoribosomes are attached to the mitochondrial inner membrane and translation products are cotranslationally integrated into the membrane. The polypeptide is Large ribosomal subunit protein bL27m (MRP7) (Saccharomyces cerevisiae (strain ATCC 204508 / S288c) (Baker's yeast)).